A 412-amino-acid polypeptide reads, in one-letter code: FAD-dependent monooxygenase nscC (412 aa).

An N-terminal signal peptide occupies residues 1 to 21 (MGKPQETILIIGAGIAGLTAS). FAD contacts are provided by Glu35 and Ala46. Residues Asn68 and Asn92 are each glycosylated (N-linked (GlcNAc...) asparagine). Arg119 contacts FAD. Asn170, Asn231, and Asn251 each carry an N-linked (GlcNAc...) asparagine glycan. FAD-binding residues include Asp326 and Gly339.

It belongs to the paxM FAD-dependent monooxygenase family. FAD is required as a cofactor.

It participates in secondary metabolite biosynthesis. FAD-dependent monooxygenase; part of the gene cluster that mediates the biosynthesis of neosartoricin B, a prenylated anthracenone that probably exhibits T-cell antiproliferative activity, suggestive of a physiological role as an immunosuppressive agent. The non-reducing polyketide synthase nscA probably synthesizes and cyclizes the decaketide backbone. The hydrolase nscB then mediates the product release through hydrolysis followed by spontaneous decarboxylation. The prenyltransferase nscD catalyzes the addition of the dimethylallyl group to the aromatic C5. The FAD-dependent monooxygenase nscC is then responsible for the stereospecific hydroxylation at C2. Neosartoricin B can be converted into two additional compounds neosartoricins C and D. Neosartoricin C is a spirocyclic compound that is cyclized through the attack of C3 hydroxyl on C14, followed by dehydration. On the other hand, neosartoricin D is a further cyclized compound in which attack of C2 on C14 in neosartoricin C results in the formation of the acetal-containing dioxabicyclo-octanone ring. Both of these compounds are novel and possibly represent related metabolites of the gene cluster. This is FAD-dependent monooxygenase nscC from Trichophyton rubrum (strain ATCC MYA-4607 / CBS 118892) (Athlete's foot fungus).